We begin with the raw amino-acid sequence, 179 residues long: Large ribosomal subunit protein uL5 (179 aa).

This sequence belongs to the universal ribosomal protein uL5 family. Part of the 50S ribosomal subunit; part of the 5S rRNA/L5/L18/L25 subcomplex. Contacts the 5S rRNA and the P site tRNA. Forms a bridge to the 30S subunit in the 70S ribosome.

In terms of biological role, this is one of the proteins that bind and probably mediate the attachment of the 5S RNA into the large ribosomal subunit, where it forms part of the central protuberance. In the 70S ribosome it contacts protein S13 of the 30S subunit (bridge B1b), connecting the 2 subunits; this bridge is implicated in subunit movement. Contacts the P site tRNA; the 5S rRNA and some of its associated proteins might help stabilize positioning of ribosome-bound tRNAs. This Pasteurella multocida (strain Pm70) protein is Large ribosomal subunit protein uL5.